The chain runs to 476 residues: MNFETVIGLEVHVELKTKSKIFSSSPTPFGAAANTQTSVIDLGYPGVLPVLNKEAVNFAMKAAMALNCEIATDTKFDRKNYFYPDNPKAYQISQFDKPIGENGWIEIEVGGKTKRIGITRLHLEEDAGKLTHTGDGYSLVDYNRQGTPLVEIVSEPDIRTPEEAYAYLEKLKSIIQYTGVSDCKMEEGSLRCDANISLRPIGQEEFGTKTELKNLNSFAFVQKGLEHEEKRQAQVLLSGGVIQQETRRYDEASKTTILMRVKEGSDDYRYFPEPDLVELYIDDEWKQRVKDSIPELPDERRKRYIEELGLPAYDAKVLTLTKEMSDFFEAAVEKGADAKLASNWLMGEVSAYLNAQQKELADVELTPEGLAGLVKLIEKGTISSKIAKKVFKELIEKGGDAEKIVKEKGLVQISDEATLRKLVTEALDNNPQSIEDFKNGKDRAIGFLVGQIMKASKGQANPPMVNKLLLEEINKR.

It belongs to the GatB/GatE family. GatB subfamily. As to quaternary structure, heterotrimer of A, B and C subunits.

It carries out the reaction L-glutamyl-tRNA(Gln) + L-glutamine + ATP + H2O = L-glutaminyl-tRNA(Gln) + L-glutamate + ADP + phosphate + H(+). It catalyses the reaction L-aspartyl-tRNA(Asn) + L-glutamine + ATP + H2O = L-asparaginyl-tRNA(Asn) + L-glutamate + ADP + phosphate + 2 H(+). Its function is as follows. Allows the formation of correctly charged Asn-tRNA(Asn) or Gln-tRNA(Gln) through the transamidation of misacylated Asp-tRNA(Asn) or Glu-tRNA(Gln) in organisms which lack either or both of asparaginyl-tRNA or glutaminyl-tRNA synthetases. The reaction takes place in the presence of glutamine and ATP through an activated phospho-Asp-tRNA(Asn) or phospho-Glu-tRNA(Gln). In Bacillus licheniformis (strain ATCC 14580 / DSM 13 / JCM 2505 / CCUG 7422 / NBRC 12200 / NCIMB 9375 / NCTC 10341 / NRRL NRS-1264 / Gibson 46), this protein is Aspartyl/glutamyl-tRNA(Asn/Gln) amidotransferase subunit B.